A 314-amino-acid chain; its full sequence is MLDFEKPLFEIRNKIDSLKESQEKNEVDLQDEIDMLEASLKRETTKVYTNLKPWDRVQIARLPERPTTLDYIPYIFDSFIELHGDRSFRDDPAMIGGIGYLDGKSVTVIGQQRGKDTKDNIYRNFGMAHPEGYRKALRLMKQAEKFNRPIFTFIDTKGAYPGKAAEERGQSESIAKNLMEMASLTVPVIAVVIGEGGSGGALGIGISNRVLMLENSTYSVISPEGAAALLWKDSNLAQIAAETMKITAHDLLDLGIIDEVINEPLGGAQKDEEAQALSIKKMFLKHLNELKQLTPEELANDRFEKFRKIGSVVE.

The 258-residue stretch at 32-289 (EIDMLEASLK…KKMFLKHLNE (258 aa)) folds into the CoA carboxyltransferase C-terminal domain.

This sequence belongs to the AccA family. As to quaternary structure, acetyl-CoA carboxylase is a heterohexamer composed of biotin carboxyl carrier protein (AccB), biotin carboxylase (AccC) and two subunits each of ACCase subunit alpha (AccA) and ACCase subunit beta (AccD).

It is found in the cytoplasm. It carries out the reaction N(6)-carboxybiotinyl-L-lysyl-[protein] + acetyl-CoA = N(6)-biotinyl-L-lysyl-[protein] + malonyl-CoA. Its pathway is lipid metabolism; malonyl-CoA biosynthesis; malonyl-CoA from acetyl-CoA: step 1/1. Component of the acetyl coenzyme A carboxylase (ACC) complex. First, biotin carboxylase catalyzes the carboxylation of biotin on its carrier protein (BCCP) and then the CO(2) group is transferred by the carboxyltransferase to acetyl-CoA to form malonyl-CoA. The protein is Acetyl-coenzyme A carboxylase carboxyl transferase subunit alpha of Staphylococcus epidermidis (strain ATCC 35984 / DSM 28319 / BCRC 17069 / CCUG 31568 / BM 3577 / RP62A).